Here is a 143-residue protein sequence, read N- to C-terminus: Cell division protein SepF (143 aa).

Belongs to the SepF family. In terms of assembly, homodimer. Interacts with FtsZ.

It is found in the cytoplasm. In terms of biological role, cell division protein that is part of the divisome complex and is recruited early to the Z-ring. Probably stimulates Z-ring formation, perhaps through the cross-linking of FtsZ protofilaments. Its function overlaps with FtsA. This chain is Cell division protein SepF, found in Geobacillus thermodenitrificans (strain NG80-2).